A 1237-amino-acid polypeptide reads, in one-letter code: Clustered mitochondria protein homolog (1237 aa).

Positions 291-535 (DITRSQENCL…RITPLDVAWS (245 aa)) constitute a Clu domain. 2 stretches are compositionally biased toward basic and acidic residues: residues 575–597 (RKTAKREAEKTKAVEAQNEDKAE) and 845–854 (SQIKSQEHSP). 2 disordered regions span residues 575 to 614 (RKTAKREAEKTKAVEAQNEDKAELLSTSDPGEGENKAVAS) and 845 to 886 (SQIK…VAAS). 3 TPR repeats span residues 957–990 (AKLYHQLSMLYYQTDEKEAAVELARKAVIVTERT), 999–1032 (ILSYLNLSLFEHASGNTHTALIYIRHALELWKII), and 1041–1074 (ITTMNNAAVMLQHLKKYPDSRKWFEASLTVCEGL). Disordered stretches follow at residues 1152–1189 (RLRRTNLSPRMTIGTKPQPQVGQNAPATTNGATSKSIG) and 1201–1237 (FIEGGGESRSPRSKQKKRAAASNPKLRGSKQSTVQTA). A compositionally biased stretch (polar residues) spans 1156 to 1187 (TNLSPRMTIGTKPQPQVGQNAPATTNGATSKS).

It belongs to the CLU family. In terms of assembly, may associate with the eukaryotic translation initiation factor 3 (eIF-3) complex.

The protein localises to the cytoplasm. Its function is as follows. mRNA-binding protein involved in proper cytoplasmic distribution of mitochondria. This chain is Clustered mitochondria protein homolog, found in Ajellomyces capsulatus (strain NAm1 / WU24) (Darling's disease fungus).